We begin with the raw amino-acid sequence, 203 residues long: Cilia- and flagella-associated protein 20 (203 aa).

Belongs to the CFAP20 family.

It localises to the nucleus. The protein localises to the cytoplasm. It is found in the cytoskeleton. Its subcellular location is the microtubule organizing center. The protein resides in the centrosome. It localises to the centriole. The protein localises to the cilium basal body. It is found in the cilium axoneme. Functionally, cilium- and flagellum-specific protein that plays a role in axonemal structure organization and motility. Microtubule inner protein (MIP) part of the dynein-decorated doublet microtubules (DMTs) in cilia axoneme, which is required for motile cilia beating. Involved in the regulation of the size and morphology of cilia. Required for axonemal microtubules polyglutamylation. The protein is Cilia- and flagella-associated protein 20 of Caenorhabditis briggsae.